We begin with the raw amino-acid sequence, 406 residues long: Zinc metalloprotease Rip1 (406 aa).

A helical membrane pass occupies residues 1–21 (MMFGIGIVLFALAILVSVALH). His-21 is a binding site for Zn(2+). Glu-22 is a catalytic residue. His-25 contributes to the Zn(2+) binding site. The chain crosses the membrane as a helical span at residues 108-128 (PAMNFVIGLVLIYGIAIVWGL). The PDZ domain maps to 125 to 209 (VWGLPNLHQP…RIEFKRDGRV (85 aa)). Residue Asp-206 participates in Zn(2+) binding. Helical transmembrane passes span 327–349 (NFVLGAINLVPLLPFDGGHIAVA) and 375–395 (LMPATYVVLAVVAGYMLLTVT).

Belongs to the peptidase M50B family. It depends on Zn(2+) as a cofactor.

It localises to the cell membrane. Proteolysis is inhibited by Wag31; when Wag31 is non-functional oxidative stress increases proteolysis. In terms of biological role, a probable intramembrane site-2 protease (S2P) that cleaves type-2 transmembrane proteins within their membrane-spanning domains. Degrades PbpB (PBP3, FtsI) under conditions of oxidatives stress; degradation is inhibited by Wag31-PbpB interaction. Also cleaves anti-sigma factors RskA, RslA and RslM. Site-1 proteases have not yet been identified in this organism. Its function is as follows. Regulated intramembrane proteolysis (RIP) occurs when an extracytoplasmic signal (possibly oxidative stress) triggers a concerted proteolytic cascade to transmit information and elicit cellular responses. The membrane-spanning regulatory substrate protein (includes anti-sigma factors RskA, RslA, RsmA, and PbpB) is first cut extracytoplasmically (site-1 protease, S1P), then within the membrane itself (site-2 protease, S2P, this entry), while cytoplasmic proteases finish degrading the regulatory protein, liberating the effector protein (ECF sigma factors SigK, SigL and SigM). The protein is Zinc metalloprotease Rip1 (rip1) of Mycolicibacterium smegmatis (strain ATCC 700084 / mc(2)155) (Mycobacterium smegmatis).